The chain runs to 200 residues: Coiled-coil domain-containing protein 28B (200 aa).

The residue at position 1 (Met-1) is an N-acetylmethionine. Over residues 1 to 10 the composition is skewed to basic residues; that stretch reads MDDKKKKRSP. Residues 1–49 are disordered; that stretch reads MDDKKKKRSPKPCLAQPAQAPGTLRRVPVPTSHSGSLALGLPHLPSPKQ. Residues Ser-46 and Ser-115 each carry the phosphoserine modification. Acidic residues predominate over residues 141-152; the sequence is EEEDDEEEEDGV. Residues 141–164 form a disordered region; it reads EEEDDEEEEDGVTEGLPEEQKKTM. Residues 158 to 183 are a coiled coil; sequence EEQKKTMADRNLDQLLSNLEDLSNSI.

In terms of assembly, interacts with BBS1, BBS2, BBS4, BBS5, BBS6, BBS7 and TTC8/BBS8. Interacts with MAPKAP1/SIN1 isoform 1 and RICTOR.

Its subcellular location is the cytoplasm. It is found in the cytoskeleton. The protein resides in the microtubule organizing center. The protein localises to the centrosome. Functionally, involved in ciliogenesis. Regulates cilia length through its interaction with MAPKAP1/SIN1 but independently of mTORC2 complex. Modulates mTORC2 complex assembly and function, possibly enhances AKT1 phosphorylation. Does not seem to modulate assembly and function of mTORC1 complex. This is Coiled-coil domain-containing protein 28B (CCDC28B) from Homo sapiens (Human).